We begin with the raw amino-acid sequence, 1305 residues long: Contactin-associated protein like 5-3 (1305 aa).

Residues 1-24 form the signal peptide; that stretch reads MDSVPRLNSVFTLVLSGLWHFGLT. Residues 25–174 form the F5/8 type C domain; the sequence is ATNYNCDDPL…IGMRVEVYGC (150 aa). Residues 25–1235 are Extracellular-facing; the sequence is ATNYNCDDPL…EPLTNAVPSD (1211 aa). 2 Laminin G-like domains span residues 180 to 360 and 367 to 544; these read VADF…TFSC and PITF…IDLC. N-linked (GlcNAc...) asparagine glycosylation occurs at Asn-282. Cys-329 and Cys-360 are oxidised to a cystine. N-linked (GlcNAc...) asparagine glycosylation occurs at Asn-496. Intrachain disulfides connect Cys-512-Cys-544, Cys-550-Cys-561, and Cys-555-Cys-570. Positions 546 to 583 constitute an EGF-like 1 domain; it reads IKDRCLPNYCEHGGQCAQTWTNFYCNCSDTGYTGATCH. Residue Asn-571 is glycosylated (N-linked (GlcNAc...) asparagine). Residues Cys-572 and Cys-582 are joined by a disulfide bond. A Fibrinogen C-terminal domain is found at 584–790; that stretch reads DSIYEQSCEV…LRCYGDRHFW (207 aa). The 166-residue stretch at 791-956 folds into the Laminin G-like 3 domain; the sequence is NAVSFSTEAS…KVTSGVRPGC (166 aa). 4 disulfide bridges follow: Cys-929-Cys-956, Cys-960-Cys-973, Cys-967-Cys-982, and Cys-984-Cys-994. Residues 957 to 995 enclose the EGF-like 2 domain; it reads PGHCSSYGRNCQNGGKCVEKHIGYSCDCTNSPYEGPFCQ. The Laminin G-like 4 domain maps to 1013 to 1198; that stretch reads QEPYSVTKNT…VQRTLTESSC (186 aa). 2 N-linked (GlcNAc...) asparagine glycosylation sites follow: Asn-1023 and Asn-1057. Residues Cys-1163 and Cys-1198 are joined by a disulfide bond. A helical membrane pass occupies residues 1236-1256; that stretch reads LAVIGGIIAVVTFISFSVIGI. Topologically, residues 1257-1305 are cytoplasmic; that stretch reads MTHFFYQHKRSHYASQMKEKEYPENVDSSSRNDIDLQNTTRECKQEDFI.

The protein belongs to the neurexin family. As to expression, expressed in brain.

The protein localises to the membrane. In terms of biological role, may play a role in the correct development and proper functioning of the peripheral and central nervous system and be involved in cell adhesion and intercellular communication. In Mus musculus (Mouse), this protein is Contactin-associated protein like 5-3 (Cntnap5c).